A 231-amino-acid chain; its full sequence is Probable septum site-determining protein MinC (231 aa).

Positions 102–125 are disordered; that stretch reads KEKAPRPAPAPQAPAQNTTPVTKT.

It belongs to the MinC family. As to quaternary structure, interacts with MinD and FtsZ.

Functionally, cell division inhibitor that blocks the formation of polar Z ring septums. Rapidly oscillates between the poles of the cell to destabilize FtsZ filaments that have formed before they mature into polar Z rings. Prevents FtsZ polymerization. This Escherichia coli O139:H28 (strain E24377A / ETEC) protein is Probable septum site-determining protein MinC.